The sequence spans 582 residues: Arginine--tRNA ligase (582 aa).

The short motif at 128 to 138 (PNLAKEMHVGH) is the 'HIGH' region element.

This sequence belongs to the class-I aminoacyl-tRNA synthetase family. As to quaternary structure, monomer.

It is found in the cytoplasm. The catalysed reaction is tRNA(Arg) + L-arginine + ATP = L-arginyl-tRNA(Arg) + AMP + diphosphate. This chain is Arginine--tRNA ligase, found in Colwellia psychrerythraea (strain 34H / ATCC BAA-681) (Vibrio psychroerythus).